Consider the following 1393-residue polypeptide: MQCYTELLPPTGVTHSLALPFISESANNLVVARTSRLQIFSLLDVGPRPGGIEEQGVPKLVLEREYALPGTVTDLCRVKLLNTKSGGEAILLAFRNAKLALIEWDPGRYGICTISIHYYERDDSTSSPWVPDLSSCGSILSVDPSSRCAVFNFGIRNLAILPFHQPGDDLVMDDYGELDDERLGSHGLESGTDCDMTKESIAHRAPYSSSFVLPLAALDPSILHPISLAFLYEYREPTFGILYSQVATSNALLHERKDVVFYTVFTLDLEQRASTTLLSVSRLPSDLFKVVALPPPVGGALLIGSNELVHVDQAGKTNAVGVNEFSRQVSSFSMTDQSDLALRLEGCIVERLSETNGDLLLVPTTGEIVLVKFRLDGRSVSGISVHPIPPHAGGDIVKSAASSSAFLGDKRVFLGSEDADSILLGWSVPSSGTKKPRPQARHTEEDSGGFSDEDQSEDDVYEDDLYATVPEVVVDGRRPSAESFGSSLYNFREYDRLLNIGPLKDIAFGRSFTSLGGEENAGNDSGLELVASQGWDRSGGLAVMKRGLELQVLNSMRTDLASCVWTASVAHMEEAVSKTTTQAENRECHQYVVVSKATSAEREQSEVFRVEGQELRPFRAPEFNPNEDVTIDIGTLIGKNRVVQILRSEVRSYDGDLGLAQIYPVWDEDTSEERMAISSSLVDPYVAILRDDSTLLLLQADDSGDLDEVELNEQIANSKWTSCCLYFDKTGIFSSISATSDELAQNSMTLFLMTQDCRLFIYRLPDQKLLAIIEGVDCLPPVLSSEPPKRSTTREVLTEIVVADLGDSWSSFPYLIIRSRHDDLAVYRPFISITKSVGEPHADLNFLKETNLVLPRITSGVEDQSSTEEVIKSVPLRIVSNISGFSAIFRPGVSPGFIVRTSTSSPHFLGLKGGYAQSLSKFQTSECGEGFILLDSKVLCFILLCLTYCILSFHTGCHSYYPWTIQQIPIGEQVDHLAYSSSSGMYVIGTSHRTEFKLPEDDELHPEWRNEMTSFFPEVQRSSLKVVSPKTWTVIDSPAEHVMAVKNMSLEISENTHERKDMIVVGTAFARGEDIASRGCVYVFEVIKVVPDPKRPEMDRKLRLVGKEPVKGAVTALSEIGGQGFLIVAQGQKCIVRGLKEDGSLLPVAFMDVQCHVSVVKELKGTGMCIIADAVKGLWFAGYSEEPYKMSLFAKDLDYLEVLAADFLPDGNKLFILVADSDCNLHVLQYDPEDPKSSNGDRLLSRSKFHTGNFISTLTLLPRTSVSSEQMISDVDAMDVDIKIPRHQMLITSQNGSVGLVTCVSEESYRRLSALQSQLTNTIEHPCGLNPRAFRAVESDGTAGRGMLDGKLLFQWLDMSKQRKVEIASRVGANEWEIKADFEAISGEGLGYL.

The tract at residues 427-458 is disordered; the sequence is SVPSSGTKKPRPQARHTEEDSGGFSDEDQSED.

This sequence belongs to the CFT1 family.

It localises to the nucleus. Its function is as follows. RNA-binding component of the cleavage and polyadenylation factor (CPF) complex, which plays a key role in polyadenylation-dependent pre-mRNA 3'-end formation and cooperates with cleavage factors including the CFIA complex and NAB4/CFIB. Involved in poly(A) site recognition. May be involved in coupling transcription termination and mRNA 3'-end formation. This chain is Protein cft1 (cft1), found in Aspergillus oryzae (strain ATCC 42149 / RIB 40) (Yellow koji mold).